The following is an 827-amino-acid chain: Periplasmic nitrate reductase (827 aa).

Positions 1–32 (MNLSRRDFMKANAALAAASVAGLIIPVKNVNA) form a signal peptide, tat-type signal. One can recognise a 4Fe-4S Mo/W bis-MGD-type domain in the interval 37–93 (ITWDKAVCRFCGTGCAVLVGTKDGRVVASQGDPDAEVNRGLNCIKGYFLPKIMYGKD). [4Fe-4S] cluster contacts are provided by Cys-44, Cys-47, Cys-51, and Cys-79. Residues Lys-81, Gln-148, Asn-173, Cys-177, 210–217 (WGSNMAEM), 242–246 (STFEH), 261–263 (QSD), Met-372, Gln-376, Asn-482, 508–509 (SD), Lys-531, Asp-558, and 717–726 (TGRILEHWHT) each bind Mo-bis(molybdopterin guanine dinucleotide). Substrate is bound at residue Phe-793. Mo-bis(molybdopterin guanine dinucleotide) is bound by residues Asn-801 and Lys-818.

This sequence belongs to the prokaryotic molybdopterin-containing oxidoreductase family. NasA/NapA/NarB subfamily. In terms of assembly, component of the periplasmic nitrate reductase NapAB complex composed of NapA and NapB. The cofactor is [4Fe-4S] cluster. Mo-bis(molybdopterin guanine dinucleotide) is required as a cofactor. Post-translationally, predicted to be exported by the Tat system. The position of the signal peptide cleavage has not been experimentally proven.

It is found in the periplasm. It carries out the reaction 2 Fe(II)-[cytochrome] + nitrate + 2 H(+) = 2 Fe(III)-[cytochrome] + nitrite + H2O. Functionally, catalytic subunit of the periplasmic nitrate reductase complex NapAB. Receives electrons from NapB and catalyzes the reduction of nitrate to nitrite. This chain is Periplasmic nitrate reductase, found in Histophilus somni (strain 129Pt) (Haemophilus somnus).